Reading from the N-terminus, the 32-residue chain is Turripeptide XIV-18 (32 aa).

At Ile-30 the chain carries Isoleucine amide.

In terms of processing, contains 2 disulfide bonds. As to expression, expressed by the venom duct.

It is found in the secreted. The chain is Turripeptide XIV-18 from Gemmula speciosa (Splendid gem-turris).